A 397-amino-acid chain; its full sequence is L-cysteine desulfidase (397 aa).

The Proton acceptor role is filled by Cys-23. Cys-288, Cys-330, and Cys-337 together coordinate [4Fe-4S] cluster.

The protein belongs to the L-cysteine desulfidase family. Homotrimer. The cofactor is [4Fe-4S] cluster.

It carries out the reaction L-cysteine + H2O = hydrogen sulfide + pyruvate + NH4(+) + H(+). In terms of biological role, catalyzes the cleavage of L-cysteine to form 2-aminoprop-2-enoate and sulfide. The former then spontaneously hydrolyzes to pyruvate and NH(3). May be responsible for the production of sulfide required for the biosynthesis of iron-sulfur centers in this archaea. In Methanococcus maripaludis (strain C7 / ATCC BAA-1331), this protein is L-cysteine desulfidase.